We begin with the raw amino-acid sequence, 166 residues long: Large ribosomal subunit protein uL10 (166 aa).

This sequence belongs to the universal ribosomal protein uL10 family. In terms of assembly, part of the ribosomal stalk of the 50S ribosomal subunit. The N-terminus interacts with L11 and the large rRNA to form the base of the stalk. The C-terminus forms an elongated spine to which L12 dimers bind in a sequential fashion forming a multimeric L10(L12)X complex.

Forms part of the ribosomal stalk, playing a central role in the interaction of the ribosome with GTP-bound translation factors. The chain is Large ribosomal subunit protein uL10 from Shewanella sediminis (strain HAW-EB3).